Here is a 181-residue protein sequence, read N- to C-terminus: Oligoribonuclease (181 aa).

Residues 8-171 (LIWIDLEMTG…DDIRESVGEL (164 aa)) enclose the Exonuclease domain. The active site involves tyrosine 129.

The protein belongs to the oligoribonuclease family.

The protein resides in the cytoplasm. Its function is as follows. 3'-to-5' exoribonuclease specific for small oligoribonucleotides. This is Oligoribonuclease from Serratia proteamaculans (strain 568).